A 437-amino-acid polypeptide reads, in one-letter code: tRNA(Ile2) 2-agmatinylcytidine synthetase TiaS (437 aa).

It belongs to the TiaS family.

It is found in the cytoplasm. It carries out the reaction cytidine(34) in tRNA(Ile2) + agmatine + ATP + H2O = 2-agmatinylcytidine(34) in tRNA(Ile2) + AMP + 2 phosphate + 2 H(+). In terms of biological role, ATP-dependent agmatine transferase that catalyzes the formation of 2-agmatinylcytidine (agm2C) at the wobble position (C34) of tRNA(Ile2), converting the codon specificity from AUG to AUA. This is tRNA(Ile2) 2-agmatinylcytidine synthetase TiaS from Acidilobus saccharovorans (strain DSM 16705 / JCM 18335 / VKM B-2471 / 345-15).